The chain runs to 140 residues: Nucleoside diphosphate kinase (140 aa).

ATP-binding residues include Lys11, Phe59, Arg87, Thr93, Arg104, and Asn114. The active-site Pros-phosphohistidine intermediate is the His117.

It belongs to the NDK family. In terms of assembly, homotetramer. It depends on Mg(2+) as a cofactor.

The protein resides in the cytoplasm. It carries out the reaction a 2'-deoxyribonucleoside 5'-diphosphate + ATP = a 2'-deoxyribonucleoside 5'-triphosphate + ADP. It catalyses the reaction a ribonucleoside 5'-diphosphate + ATP = a ribonucleoside 5'-triphosphate + ADP. In terms of biological role, major role in the synthesis of nucleoside triphosphates other than ATP. The ATP gamma phosphate is transferred to the NDP beta phosphate via a ping-pong mechanism, using a phosphorylated active-site intermediate. This chain is Nucleoside diphosphate kinase, found in Gluconacetobacter diazotrophicus (strain ATCC 49037 / DSM 5601 / CCUG 37298 / CIP 103539 / LMG 7603 / PAl5).